The primary structure comprises 34 residues: Trypsin inhibitor 2 (34 aa).

Positions 1–34 (SGSDGGVCPKILKKCRRDSDCPGACICRGNGYCG) form a cross-link, cyclopeptide (Ser-Gly). Positions 4–5 (DG) form a cross-link, (2-aminosuccinimidyl)acetic acid (Asp-Gly); alternate. The isoaspartyl glycine isopeptide (Asp-Gly); alternate cross-link spans 4–5 (DG). Intrachain disulfides connect Cys-8–Cys-25, Cys-15–Cys-27, and Cys-21–Cys-33.

Post-translationally, a cyclic succinimide probably forms by loss of water between Asp-4 and Gly-5, that can then rehydrate to either the original peptide bond or to a beta-aspartyl isopeptide bond. Three isoforms of MCoTI-II are detected, two with the parent molecular weight, corresponding to the unmodified and proposed isopeptide forms, and one with a molecular weight 18 Da lower, corresponding to a succinimide cross-linked form. This is a cyclic peptide.

The protein localises to the secreted. Inhibits trypsin; probably participates in a plant defense mechanism. This chain is Trypsin inhibitor 2, found in Momordica cochinchinensis (Spiny bitter cucumber).